Reading from the N-terminus, the 230-residue chain is MGQKVHPNGIRLGITKPWISTWYADKSDYANNLHSDWEVRKFLEKKLEAASVSKIVIERPAKSIRVTIHTARPGVVIGKKGEDVEVLRAEVAKISGTPAQINIAEIRKPELDAKLVADSIAQQLERRVMFRRAMKRAVQNAMRIGAQGIKVEVSGRLGGAEIARTEWYREGRVPLHTLRADIDYATSESHTTYGVIGIKVWVFKGEVLDGMLPQVEEPKQQQPKRKPRGK.

The 69-residue stretch at 39–107 (VRKFLEKKLE…PAQINIAEIR (69 aa)) folds into the KH type-2 domain.

This sequence belongs to the universal ribosomal protein uS3 family. Part of the 30S ribosomal subunit. Forms a tight complex with proteins S10 and S14.

Functionally, binds the lower part of the 30S subunit head. Binds mRNA in the 70S ribosome, positioning it for translation. The protein is Small ribosomal subunit protein uS3 of Shewanella amazonensis (strain ATCC BAA-1098 / SB2B).